Consider the following 502-residue polypeptide: UPF0371 protein CLH_2534 (502 aa).

Belongs to the UPF0371 family.

The polypeptide is UPF0371 protein CLH_2534 (Clostridium botulinum (strain Alaska E43 / Type E3)).